A 297-amino-acid polypeptide reads, in one-letter code: Tumor necrosis factor receptor superfamily member 27 (297 aa).

At 1-138 (MDCQENEYRD…AHTVPPREAT (138 aa)) the chain is on the extracellular side. 3 TNFR-Cys repeats span residues 2-41 (DCQE…DAHC), 43-83 (VCPP…NAIC), and 85-118 (DCLP…EVQC). Cystine bridges form between C3-C15, C18-C31, C21-C41, C44-C58, C61-C75, C64-C83, C86-C104, and C107-C118. N-linked (GlcNAc...) asparagine glycosylation is found at N74 and N77. A helical; Signal-anchor for type III membrane protein membrane pass occupies residues 139–159 (LVALVGSLLVVFALAFLGLFF). At 160-297 (LYCKQIFNRH…LYVPFEVPSL (138 aa)) the chain is on the cytoplasmic side.

In terms of assembly, associates with TRAF1, TRAF3 and TRAF6.

The protein resides in the membrane. Its function is as follows. Receptor for EDA isoform A2, but not for EDA isoform A1. Mediates the activation of the NF-kappa-B and JNK pathways. Activation seems to be mediated by binding to TRAF3 and TRAF6. The sequence is that of Tumor necrosis factor receptor superfamily member 27 (Eda2r) from Mus musculus (Mouse).